The sequence spans 302 residues: Ornithine carbamoyltransferase (302 aa).

Carbamoyl phosphate-binding positions include 52–55, Q79, R103, and 130–133; these read STRT and HPCQ. Residues N161, D221, and 225–226 each bind L-ornithine; that span reads SM. Carbamoyl phosphate-binding positions include 261–262 and R289; that span reads CL.

It belongs to the aspartate/ornithine carbamoyltransferase superfamily. OTCase family.

It is found in the cytoplasm. The catalysed reaction is carbamoyl phosphate + L-ornithine = L-citrulline + phosphate + H(+). It functions in the pathway amino-acid biosynthesis; L-arginine biosynthesis; L-arginine from L-ornithine and carbamoyl phosphate: step 1/3. In terms of biological role, reversibly catalyzes the transfer of the carbamoyl group from carbamoyl phosphate (CP) to the N(epsilon) atom of ornithine (ORN) to produce L-citrulline. In Methanospirillum hungatei JF-1 (strain ATCC 27890 / DSM 864 / NBRC 100397 / JF-1), this protein is Ornithine carbamoyltransferase.